A 1486-amino-acid chain; its full sequence is Chromosome partition protein MukB (1486 aa).

Residue 34–41 (GGNGAGKS) participates in ATP binding. Coiled-coil stretches lie at residues 326–418 (LEAD…QYNQ), 444–480 (LETFQAKELEATEKMLSLEQKMSMAQTAHSQFEQAYQ), and 509–603 (RHLA…RAPV). Residues 666-783 (PGGSEDQRLN…EVPLFGRAAR (118 aa)) form a flexible hinge region. Coiled coils occupy residues 835–923 (EAEI…AKLE), 977–1115 (EMLS…TAKA), and 1209–1266 (VEAI…QNVS).

This sequence belongs to the SMC family. MukB subfamily. Homodimerization via its hinge domain. Binds to DNA via its C-terminal region. Interacts, and probably forms a ternary complex, with MukE and MukF via its C-terminal region. The complex formation is stimulated by calcium or magnesium. Interacts with tubulin-related protein FtsZ.

The protein resides in the cytoplasm. Its subcellular location is the nucleoid. In terms of biological role, plays a central role in chromosome condensation, segregation and cell cycle progression. Functions as a homodimer, which is essential for chromosome partition. Involved in negative DNA supercoiling in vivo, and by this means organize and compact chromosomes. May achieve or facilitate chromosome segregation by condensation DNA from both sides of a centrally located replisome during cell division. The chain is Chromosome partition protein MukB from Escherichia coli (strain SMS-3-5 / SECEC).